A 647-amino-acid polypeptide reads, in one-letter code: Chaperone protein DnaK (647 aa).

A Phosphothreonine; by autocatalysis modification is found at Thr-198. Composition is skewed to basic and acidic residues over residues 514–529 (AEAN…ESVD), 540–557 (STEK…DADK), and 600–622 (SQEK…KDDN). Disordered regions lie at residues 514 to 557 (AEAN…DADK) and 596 to 647 (AIYK…EKSA). Residues 623-632 (VVDADFEEVK) are compositionally biased toward acidic residues. Positions 633–647 (EESKEGKEEDKEKSA) are enriched in basic and acidic residues.

The protein belongs to the heat shock protein 70 family.

Acts as a chaperone. In Pelagibacter ubique (strain HTCC1062), this protein is Chaperone protein DnaK.